A 393-amino-acid chain; its full sequence is Chalcone synthase DII (393 aa).

C164 is an active-site residue.

Belongs to the thiolase-like superfamily. Chalcone/stilbene synthases family.

It carries out the reaction (E)-4-coumaroyl-CoA + 3 malonyl-CoA + 3 H(+) = 2',4,4',6'-tetrahydroxychalcone + 3 CO2 + 4 CoA. It functions in the pathway secondary metabolite biosynthesis; flavonoid biosynthesis. Functionally, the primary product of this enzyme is 4,2',4',6'-tetrahydroxychalcone (also termed naringenin-chalcone or chalcone) which can under specific conditions spontaneously isomerize into naringenin. This is Chalcone synthase DII (CHS-DII) from Ipomoea batatas (Sweet potato).